Reading from the N-terminus, the 145-residue chain is MASKSSITHLLLAAVLVSVFAAAAATGPYCYPGMGLPSNPLEGCREYVAQQTCGVGIVGSPVSTEPGNTPRDRCCKELYDASQHCRCEAVRYFIGRTSDPNSGVLKDLPGCPREPQRDFAKVLVTPGHCNVMTVHNTPYCLGLDI.

A signal peptide spans 1 to 25 (MASKSSITHLLLAAVLVSVFAAAAA).

This sequence belongs to the protease inhibitor I6 (cereal trypsin/alpha-amylase inhibitor) family. In terms of tissue distribution, developing endosperm.

Its subcellular location is the secreted. Its function is as follows. Alpha-amylase/trypsin inhibitor. It could be involved in insect defense mechanisms. The sequence is that of Alpha-amylase/trypsin inhibitor CM2 from Triticum aestivum (Wheat).